We begin with the raw amino-acid sequence, 274 residues long: UPF0173 metal-dependent hydrolase A2cp1_1196 (274 aa).

This sequence belongs to the UPF0173 family.

The protein is UPF0173 metal-dependent hydrolase A2cp1_1196 of Anaeromyxobacter dehalogenans (strain 2CP-1 / ATCC BAA-258).